We begin with the raw amino-acid sequence, 467 residues long: Cobyrinate a,c-diamide synthase (467 aa).

One can recognise a GATase cobBQ-type domain in the interval 256–449; it reads RVGYAADQAF…AHIHVEGAPE (194 aa). Cys-338 serves as the catalytic Nucleophile.

Belongs to the CobB/CbiA family. Requires Mg(2+) as cofactor.

It carries out the reaction cob(II)yrinate + 2 L-glutamine + 2 ATP + 2 H2O = cob(II)yrinate a,c diamide + 2 L-glutamate + 2 ADP + 2 phosphate + 2 H(+). The protein operates within cofactor biosynthesis; adenosylcobalamin biosynthesis; cob(II)yrinate a,c-diamide from sirohydrochlorin (anaerobic route): step 10/10. In terms of biological role, catalyzes the ATP-dependent amidation of the two carboxylate groups at positions a and c of cobyrinate, using either L-glutamine or ammonia as the nitrogen source. The protein is Cobyrinate a,c-diamide synthase of Magnetococcus marinus (strain ATCC BAA-1437 / JCM 17883 / MC-1).